The following is a 596-amino-acid chain: Pumilio homolog 12 (596 aa).

The 343-residue stretch at 254–596 folds into the PUM-HD domain; that stretch reads LNEDLTMSLN…KVLSALSSKK (343 aa). 8 Pumilio repeats span residues 277-312, 313-348, 349-388, 389-424, 425-460, 461-496, 497-532, and 533-570; these read EARG…MIFN, EIID…QIVH, SITR…IIIS, ALKH…FLFE, AAIT…HLVS, EIAS…EILE, QLEG…RIIR, and ELIN…LLVD.

It is found in the cytoplasm. Its subcellular location is the nucleus. Functionally, sequence-specific RNA-binding protein that regulates translation and mRNA stability by binding the 3'-UTR of target mRNAs. This Arabidopsis thaliana (Mouse-ear cress) protein is Pumilio homolog 12 (APUM12).